A 69-amino-acid chain; its full sequence is UPF0346 protein YuiB (69 aa).

The protein belongs to the UPF0346 family.

The protein is UPF0346 protein YuiB (yuiB) of Lactococcus lactis subsp. lactis (strain IL1403) (Streptococcus lactis).